The chain runs to 417 residues: NADH-quinone oxidoreductase subunit D (417 aa).

The protein belongs to the complex I 49 kDa subunit family. In terms of assembly, NDH-1 is composed of 14 different subunits. Subunits NuoB, C, D, E, F, and G constitute the peripheral sector of the complex.

Its subcellular location is the cell inner membrane. It carries out the reaction a quinone + NADH + 5 H(+)(in) = a quinol + NAD(+) + 4 H(+)(out). NDH-1 shuttles electrons from NADH, via FMN and iron-sulfur (Fe-S) centers, to quinones in the respiratory chain. The immediate electron acceptor for the enzyme in this species is believed to be ubiquinone. Couples the redox reaction to proton translocation (for every two electrons transferred, four hydrogen ions are translocated across the cytoplasmic membrane), and thus conserves the redox energy in a proton gradient. This is NADH-quinone oxidoreductase subunit D from Polaromonas naphthalenivorans (strain CJ2).